We begin with the raw amino-acid sequence, 888 residues long: MLRQVLHRGLRTCFSRLGHFIASHPVFFASAPVLISILLGASFSRYQVEESVEHLLAPQHSLAKIERNLVNSLFPVNRSKHRLYSDLQTPGRYGRVIVTSYQKANMLDQHHTDLILKLHTAVTKIQVPRPGFNYTFAHICVLNNDKTCIVDDIVHVLEELKNARATNRTNFAITYPITHLKDGRAVYNGHQLGGVTVHSKDRVKSAEAIQLTYYLQSINSLNDMVAERWESSFCDTVKLFQKSNSKVKIYPYTSSSLREDFQKTSRVSERYLVTSLILVVTMAILCCSMQDCVRSKPWLGLLGLVTISLATLTAAGIINLTGGKYNSTFLGVPFVMLGHGLYGTFEMLSSWRKTREDQHVKERTAEVYADSMLSFSLTTAMYLVTFGIGASPFTNIEAARIFCCNSCIAILFNYLYVLSFYGSSLVFTGYIENNYQHSIFCRKVPKPDVLQEKPAWYRFLLTARFSEETAEGEEANTYESHLLVCFLKRYYCDWITNTYVKPFVVLFYLIYISFALMGYLQVSEGSDLSNIVATATQTIEYTTAHQKYFNNYSPVIGFYIYESIEYWNSSVQEDVLEYTKGFVRISWFESYLNYLRKLNVSTDLPKKNFTDMLRNSFLKTPQFSHFQEDIIFSKKYNDEVDVVASRMFLVAKTMETNREELYDLLETLRRLSVTSKVKFIVFNPSFVYMDRYASSLGAPLHNSCISALFLLFFSAFLVADSLINVWITLTVVSVEFGVIGFMTLWKVELDCISVLCLIYGINYTIDNCAPLLSTFVLGKDFTRTKWVKNALEVHGVAILQSYLCYIVGLFPLAAVPSNLTCTLFRCLFLIAFVTFFHCFAILPVILTFLPPSKKKRKEKKNPENREEIECVEMVDIDSTRVVDQITTV.

Residues 20-40 form a helical membrane-spanning segment; that stretch reads FIASHPVFFASAPVLISILLG. N77, N133, and N167 each carry an N-linked (GlcNAc...) asparagine glycan. Positions 268–427 constitute an SSD domain; sequence SERYLVTSLI…LSFYGSSLVF (160 aa). Helical transmembrane passes span 273–293 and 298–318; these read VTSL…QDCV and WLGL…AGII. N-linked (GlcNAc...) asparagine glycans are attached at residues N319 and N326. Helical transmembrane passes span 328–348, 373–393, 407–427, and 502–522; these read TFLG…FEML, LSFS…ASPF, CIAI…SLVF, and PFVV…YLQV. 3 N-linked (GlcNAc...) asparagine glycosylation sites follow: N568, N599, and N608. Helical transmembrane passes span 707–727 and 738–758; these read ALFL…NVWI and VIGF…LCLI. Residue N762 is glycosylated (N-linked (GlcNAc...) asparagine). The helical transmembrane segment at 795–815 threads the bilayer; it reads GVAILQSYLCYIVGLFPLAAV. N-linked (GlcNAc...) asparagine glycosylation is present at N818. Residues 826-846 traverse the membrane as a helical segment; sequence CLFLIAFVTFFHCFAILPVIL.

The protein belongs to the patched family. As to expression, broadly expressed in the brain. Selectively expressed in the thalamic reticular nucleus (TRN) in early development and continues to be enriched in this structure throughout adult life.

It is found in the cell membrane. The protein resides in the cell projection. The protein localises to the dendritic spine. Required for the development and function of the thalamic reticular nucleus (TRN), a part of the thalamus that is critical for thalamocortical transmission, generation of sleep rhythms, sensorimotor processing and attention. Can bind cholesterol in vitro. In Mus musculus (Mouse), this protein is Patched domain-containing protein 1.